The chain runs to 343 residues: S-adenosylmethionine:tRNA ribosyltransferase-isomerase (343 aa).

The protein belongs to the QueA family. Monomer.

It is found in the cytoplasm. The enzyme catalyses 7-aminomethyl-7-carbaguanosine(34) in tRNA + S-adenosyl-L-methionine = epoxyqueuosine(34) in tRNA + adenine + L-methionine + 2 H(+). It participates in tRNA modification; tRNA-queuosine biosynthesis. Functionally, transfers and isomerizes the ribose moiety from AdoMet to the 7-aminomethyl group of 7-deazaguanine (preQ1-tRNA) to give epoxyqueuosine (oQ-tRNA). The protein is S-adenosylmethionine:tRNA ribosyltransferase-isomerase of Geobacter metallireducens (strain ATCC 53774 / DSM 7210 / GS-15).